We begin with the raw amino-acid sequence, 388 residues long: Pepsin F (388 aa).

The N-terminal stretch at 1-15 is a signal peptide; the sequence is MKWLGLLGLVALSEC. A propeptide spans 16–58 (activation peptide); the sequence is LVTIPLMKVKSMRENLRENDILLDYLEKHPYRPTYKLLSGQQD. The Peptidase A1 domain maps to 74 to 385; that stretch reads YIGIISIGTP…DRANNRIGLA (312 aa). Residue Asp92 is part of the active site. 2 cysteine pairs are disulfide-bonded: Cys105/Cys110 and Cys266/Cys270. The active site involves Asp275. A disulfide bond links Cys309 and Cys343.

The protein belongs to the peptidase A1 family.

It localises to the secreted. It catalyses the reaction Preferential cleavage: hydrophobic, preferably aromatic, residues in P1 and P1' positions. Cleaves 1-Phe-|-Val-2, 4-Gln-|-His-5, 13-Glu-|-Ala-14, 14-Ala-|-Leu-15, 15-Leu-|-Tyr-16, 16-Tyr-|-Leu-17, 23-Gly-|-Phe-24, 24-Phe-|-Phe-25 and 25-Phe-|-Tyr-26 bonds in the B chain of insulin.. Functionally, shows particularly broad specificity; although bonds involving phenylalanine and leucine are preferred, many others are also cleaved to some extent. This is Pepsin F from Oryctolagus cuniculus (Rabbit).